The sequence spans 478 residues: Vitronectin (478 aa).

Residues 1 to 19 form the signal peptide; it reads MAPLRPFFILALVAWVSLA. Positions 20 to 63 constitute an SMB domain; the sequence is DQESCKGRCTQGFMASKKCQCDELCTYYQSCCADYMEQCKPQVT. Intrachain disulfides connect Cys24/Cys28, Cys24/Cys40, Cys28/Cys58, Cys38/Cys40, Cys38/Cys51, Cys44/Cys50, and Cys51/Cys58. The short motif at 64–66 is the Cell attachment site element; sequence RGD. At Thr69 the chain carries Phosphothreonine. A sulfotyrosine mark is found at Tyr75, Tyr78, and Tyr80. Residues 82-153 form a disordered region; that stretch reads EEPKNNTNTG…QGTPEFPEEE (72 aa). Asn86 carries an N-linked (GlcNAc...) asparagine glycan. The span at 86–99 shows a compositional bias: polar residues; it reads NNTNTGVQPENTSP. The segment covering 131 to 141 has biased composition (basic and acidic residues); that stretch reads EQQEEILRPDT. Hemopexin repeat units lie at residues 157–201, 202–249, and 250–304; these read GKPF…VWGI, EGPI…FSGI, and PDNV…FEHF. Asn168 and Asn241 each carry an N-linked (GlcNAc...) asparagine glycan. Residues Tyr278 and Tyr281 each carry the sulfotyrosine modification. Cys292 and Cys431 form a disulfide bridge. A phosphoserine mark is found at Ser311 and Ser362. A disordered region spans residues 359 to 395; it reads LSHSAQAKKQKSKRRSRKRYRSRRGRGHRRSQSSNSR. The segment covering 364-389 has biased composition (basic residues); sequence QAKKQKSKRRSRKRYRSRRGRGHRRS. The tract at residues 366–399 is heparin-binding; sequence KKQKSKRRSRKRYRSRRGRGHRRSQSSNSRRSSR. Phosphoserine; by PKA is present on Ser398. A sulfotyrosine mark is found at Tyr416, Tyr419, and Tyr421. One copy of the Hemopexin 4 repeat lies at 420 to 473; sequence DYDMDWLVPATCEPIQSVYFFSGDKYYRVNLRTRRVDSVNPPYPRSIAQYWLGC.

Interacts with SERPINE1/PAI1, insulin and C1QBP. In terms of processing, sulfated on tyrosine residues. Post-translationally, N- and O-glycosylated. It has been suggested that the active SMB domain may be permitted considerable disulfide bond heterogeneity or variability, thus two alternate disulfide patterns based on 3D structures are described with 1 disulfide bond conserved in both. Plasma.

The protein resides in the secreted. It localises to the extracellular space. In terms of biological role, vitronectin is a cell adhesion and spreading factor found in serum and tissues. Vitronectin interact with glycosaminoglycans and proteoglycans. Is recognized by certain members of the integrin family and serves as a cell-to-substrate adhesion molecule. Inhibitor of the membrane-damaging effect of the terminal cytolytic complement pathway. The protein is Vitronectin (Vtn) of Mus musculus (Mouse).